The chain runs to 412 residues: Protein MITOFERRINLIKE 1, chloroplastic (412 aa).

Residues 1-92 (MEARLSETLG…PGPEFLKWIK (92 aa)) constitute a chloroplast transit peptide. Residues 43–83 (VRNPKLKTKSSQKPPKFSANFRRSDPPFASTSISDPTHEKP) form a disordered region. Solcar repeat units lie at residues 112-198 (ERAI…GKSL), 206-288 (PTVL…LKAA), and 298-392 (LEPL…ARLT). The next 6 helical transmembrane spans lie at 115–135 (IIGA…LLPL), 167–187 (ILGF…SSAV), 208–228 (VLIP…IMVP), 262–282 (AGYS…YSSF), 303–323 (SVCC…PLDV), and 365–385 (TRGM…GYFA).

The protein belongs to the mitochondrial carrier (TC 2.A.29) family. In terms of tissue distribution, expressed in leaves, developing flowers and siliques.

The protein localises to the plastid. It is found in the chloroplast inner membrane. In terms of biological role, probably involved in iron transport into chloroplasts. The polypeptide is Protein MITOFERRINLIKE 1, chloroplastic (MFL1) (Arabidopsis thaliana (Mouse-ear cress)).